A 241-amino-acid polypeptide reads, in one-letter code: Ribosomal RNA small subunit methyltransferase G (241 aa).

S-adenosyl-L-methionine is bound by residues glycine 96, phenylalanine 101, 119-121 (EAS), 147-148 (VE), and arginine 166.

It belongs to the methyltransferase superfamily. RNA methyltransferase RsmG family.

Its subcellular location is the cytoplasm. It carries out the reaction guanosine(527) in 16S rRNA + S-adenosyl-L-methionine = N(7)-methylguanosine(527) in 16S rRNA + S-adenosyl-L-homocysteine. Its function is as follows. Specifically methylates the N7 position of guanine in position 527 of 16S rRNA. The protein is Ribosomal RNA small subunit methyltransferase G of Syntrophus aciditrophicus (strain SB).